Here is a 311-residue protein sequence, read N- to C-terminus: m7GpppX diphosphatase (311 aa).

Residues glutamate 159, lysine 181, and histidine 242 to histidine 253 contribute to the substrate site. The Histidine triad motif motif lies at histidine 249 to histidine 253. Residue histidine 251 is the Nucleophile of the active site.

It belongs to the HIT family. In terms of tissue distribution, expressed in neurons in the ventral cord, the nerve ring and the pharynx.

It localises to the nucleus. The enzyme catalyses a 5'-end (N(7)-methyl 5'-triphosphoguanosine)-ribonucleoside in mRNA + H2O = N(7)-methyl-GMP + a 5'-end diphospho-ribonucleoside in mRNA + 2 H(+). It catalyses the reaction a 5'-end (N(2),N(2),N(7)-trimethyl 5'-triphosphoguanosine)-ribonucleoside in mRNA + H2O = (N(2),N(2),N(7))-trimethyl-GMP + a 5'-end diphospho-ribonucleoside in mRNA + 2 H(+). Its activity is regulated as follows. The hydrolytic product 7-methylguanosine diphosphate (m7GDP) efficiently inhibits the decapping scavenger activity and acts as a competitive inhibitor in vitro. Decapping scavenger enzyme that catalyzes the cleavage of a residual cap structure following the degradation of mRNAs of the 3'-&gt;5' exosome-mediated mRNA decay pathway. Hydrolyzes cap analog structures like 7-methylguanosine nucleoside triphosphate (m7GpppG) and tri-methyl guanosine nucleoside triphosphate (m3(2,2,7)GpppG) with up to 2 nucleotide substrates (small capped oligoribonucleotides) and specifically releases 5'-phosphorylated RNA fragments and 7-methylguanosine monophosphate (m7GMP). Does not hydrolyze unmethylated cap analog (GpppG) and shows no decapping activity on intact m7GpppG-capped mRNA molecules. Does not hydrolyze 7-methylguanosine diphosphate (m7GDP) and tri-methylguanosine diphosphate (m3(2,2,7)GDP) to m(7)GMP and m3(2,2,7)GMP, respectively. May also play a role in the 5'-&gt;3 mRNA decay pathway; m7GDP, the downstream product released by the 5'-&gt;3' mRNA mediated decapping activity, may be also converted by dcs-1 to m7GMP. Binds to m7GpppG and strongly to m7GDP. In Caenorhabditis elegans, this protein is m7GpppX diphosphatase (dcs-1).